Consider the following 431-residue polypeptide: Citrate synthase 1 (431 aa).

Residues His-309 and Asp-366 contribute to the active site.

This sequence belongs to the citrate synthase family. Homohexamer.

It carries out the reaction oxaloacetate + acetyl-CoA + H2O = citrate + CoA + H(+). The protein operates within carbohydrate metabolism; tricarboxylic acid cycle; isocitrate from oxaloacetate: step 1/2. This chain is Citrate synthase 1 (gltA2), found in Mycobacterium tuberculosis (strain CDC 1551 / Oshkosh).